A 61-amino-acid chain; its full sequence is Sec-independent protein translocase protein TatA (61 aa).

A helical membrane pass occupies residues 1–21 (MFGLGITEILLILGIIILIFG).

Belongs to the TatA/E family. As to quaternary structure, the Tat system comprises two distinct complexes: a TatABC complex, containing multiple copies of TatA, TatB and TatC subunits, and a separate TatA complex, containing only TatA subunits. Substrates initially bind to the TatABC complex, which probably triggers association of the separate TatA complex to form the active translocon.

It is found in the cell inner membrane. Part of the twin-arginine translocation (Tat) system that transports large folded proteins containing a characteristic twin-arginine motif in their signal peptide across membranes. TatA could form the protein-conducting channel of the Tat system. The chain is Sec-independent protein translocase protein TatA from Maridesulfovibrio salexigens (strain ATCC 14822 / DSM 2638 / NCIMB 8403 / VKM B-1763) (Desulfovibrio salexigens).